The sequence spans 267 residues: tRNA pseudouridine synthase A (267 aa).

The active-site Nucleophile is Asp52. Tyr113 contributes to the substrate binding site.

This sequence belongs to the tRNA pseudouridine synthase TruA family. Homodimer.

The catalysed reaction is uridine(38/39/40) in tRNA = pseudouridine(38/39/40) in tRNA. Its function is as follows. Formation of pseudouridine at positions 38, 39 and 40 in the anticodon stem and loop of transfer RNAs. The chain is tRNA pseudouridine synthase A from Chlamydia pneumoniae (Chlamydophila pneumoniae).